Here is a 149-residue protein sequence, read N- to C-terminus: D-aminoacyl-tRNA deacylase (149 aa).

The Gly-cisPro motif, important for rejection of L-amino acids signature appears at 137-138 (GP).

The protein belongs to the DTD family. Homodimer.

It localises to the cytoplasm. It catalyses the reaction glycyl-tRNA(Ala) + H2O = tRNA(Ala) + glycine + H(+). The catalysed reaction is a D-aminoacyl-tRNA + H2O = a tRNA + a D-alpha-amino acid + H(+). In terms of biological role, an aminoacyl-tRNA editing enzyme that deacylates mischarged D-aminoacyl-tRNAs. Also deacylates mischarged glycyl-tRNA(Ala), protecting cells against glycine mischarging by AlaRS. Acts via tRNA-based rather than protein-based catalysis; rejects L-amino acids rather than detecting D-amino acids in the active site. By recycling D-aminoacyl-tRNA to D-amino acids and free tRNA molecules, this enzyme counteracts the toxicity associated with the formation of D-aminoacyl-tRNA entities in vivo and helps enforce protein L-homochirality. In Clostridium botulinum (strain Alaska E43 / Type E3), this protein is D-aminoacyl-tRNA deacylase.